The chain runs to 99 residues: uncharacterized protein (99 aa).

The signal sequence occupies residues 1 to 17 (MMMNAFFPAMALIVLVG). Cysteine 18 is lipidated: N-palmitoyl cysteine. A lipid anchor (S-diacylglycerol cysteine) is attached at cysteine 18.

It is found in the cell membrane. This is an uncharacterized protein from Escherichia coli O6:H1 (strain CFT073 / ATCC 700928 / UPEC).